A 234-amino-acid chain; its full sequence is Accessory gland protein Acp29AB (234 aa).

The N-terminal stretch at 1 to 21 (MYATNLLYLLALWNLWLVSGG) is a signal peptide. 4 N-linked (GlcNAc...) asparagine glycosylation sites follow: Asn29, Asn61, Asn127, and Asn164. The C-type lectin domain maps to 137 to 234 (VTCREMNGHL…SFVCQANQWA (98 aa)). Intrachain disulfides connect Cys139–Cys228 and Cys207–Cys220.

It is found in the secreted. In terms of biological role, responsible for physiological and behavioral changes in mated female flies. In Drosophila simulans (Fruit fly), this protein is Accessory gland protein Acp29AB (Acp29AB).